A 98-amino-acid polypeptide reads, in one-letter code: MRLFSFKGRRKKKSLFVQSEAEIPIKIMVAIGKRHAVGIAELGDQSATVEKTFLPFFKPPEPEEIAKMLLSKLGIPENEWEEILKNKTELQTNETFWR.

This is an uncharacterized protein from Sulfolobus islandicus filamentous virus (isolate Iceland/Hveragerdi) (SIFV).